A 212-amino-acid chain; its full sequence is Eukaryotic translation initiation factor 4E-4 (212 aa).

Cys143 and Cys147 are joined by a disulfide.

Belongs to the eukaryotic initiation factor 4E family. As to quaternary structure, eIF4F is a multi-subunit complex, the composition of which varies with external and internal environmental conditions. It is composed of at least eIF4A, eIF4E and eIF4G. eIF4E is also known to interact with other partners. In terms of tissue distribution, enriched in somatic cells.

Recognizes and binds the 7-methylguanosine-containing mRNA cap during an early step in the initiation of protein synthesis and facilitates ribosome binding by inducing the unwinding of the mRNAs secondary structures. All 5 eIF4E proteins bind monomethyl cap structures. Only ife-1, ife-2 and ife-5 bind trimethyl cap structures which result from trans-splicing. Translation of trimethyl cap structure mRNAs may be regulated by intracellular redox state; disulfide bonds change the width and depth of the cap-binding cavity determining selectivity to mRNA caps. This chain is Eukaryotic translation initiation factor 4E-4 (ife-4), found in Caenorhabditis elegans.